The primary structure comprises 275 residues: Hydroxyethylthiazole kinase (275 aa).

Met-57 provides a ligand contact to substrate. The ATP site is built by Arg-132 and Ser-178. Gly-205 serves as a coordination point for substrate.

This sequence belongs to the Thz kinase family. Mg(2+) is required as a cofactor.

The catalysed reaction is 5-(2-hydroxyethyl)-4-methylthiazole + ATP = 4-methyl-5-(2-phosphooxyethyl)-thiazole + ADP + H(+). The protein operates within cofactor biosynthesis; thiamine diphosphate biosynthesis; 4-methyl-5-(2-phosphoethyl)-thiazole from 5-(2-hydroxyethyl)-4-methylthiazole: step 1/1. Catalyzes the phosphorylation of the hydroxyl group of 4-methyl-5-beta-hydroxyethylthiazole (THZ). The sequence is that of Hydroxyethylthiazole kinase from Clavibacter sepedonicus (Clavibacter michiganensis subsp. sepedonicus).